A 118-amino-acid polypeptide reads, in one-letter code: Myotrophin (118 aa).

At cysteine 2 the chain carries N-acetylcysteine. Residues 2 to 30 (CDKEFMWALKNGDLDEVKDYVAKGEDVNR) form an ANK 1 repeat. 3 positions are modified to N6-acetyllysine: lysine 4, lysine 11, and lysine 24. Threonine 31 carries the post-translational modification Phosphothreonine. ANK repeat units lie at residues 34-66 (GGRKPLHYAADCGQLEILEFLLLKGADINAPDK) and 67-99 (HHITPLLSAVYEGHVSCVKLLLSKGADKTVKGP).

Belongs to the myotrophin family. Interacts with the heterodimer formed by CAPZA1 and CAPZB. Interacts with RELA.

It is found in the cytoplasm. The protein resides in the nucleus. It localises to the perinuclear region. Functionally, plays a role in the regulation of the growth of actin filaments. Inhibits the activity of the F-actin-capping protein complex formed by the CAPZA1 and CAPZB heterodimer. Promotes dimerization of NF-kappa-B subunits and regulates NF-kappa-B transcription factor activity. Promotes growth of cardiomyocytes, but not cardiomyocyte proliferation. Promotes cardiac muscle hypertrophy. In Rattus norvegicus (Rat), this protein is Myotrophin (Mtpn).